The following is a 317-amino-acid chain: Apolipoprotein E (317 aa).

The first 18 residues, Met-1–Ala-18, serve as a signal peptide directing secretion. Tandem repeats lie at residues Thr-80 to Ser-101, Pro-102 to Gly-123, Ala-124 to Gly-145, Gln-146 to Leu-167, Arg-168 to Glu-189, Arg-190 to Ala-211, Thr-212 to Arg-233, and Ala-234 to Ala-255. An 8 X 22 AA approximate tandem repeats region spans residues Thr-80 to Ala-255. At Met-143 the chain carries Methionine sulfoxide. At Ser-147 the chain carries Phosphoserine. Positions His-158–Arg-168 are LDL and other lipoprotein receptors binding. Position 162–165 (Leu-162–Arg-165) interacts with heparin. A lipid-binding and lipoprotein association region spans residues Ala-210–Met-290. Heparin is bound at residue Gly-229–Met-236. The segment at Gln-266–His-317 is homooligomerization. Residues Arg-278–Met-290 form a specificity for association with VLDL region.

Belongs to the apolipoprotein A1/A4/E family. As to quaternary structure, homotetramer. May interact with ABCA1; functionally associated with ABCA1 in the biogenesis of HDLs. May interact with APP/A4 amyloid-beta peptide; the interaction is extremely stable in vitro but its physiological significance is unclear. May interact with MAPT. May interact with MAP2. In the cerebrospinal fluid, interacts with secreted SORL1. Interacts with PMEL; this allows the loading of PMEL luminal fragment on ILVs to induce fibril nucleation. In terms of processing, APOE exists as multiple glycosylated and sialylated glycoforms within cells and in plasma. The extent of glycosylation and sialylation are tissue and context specific. Post-translationally, glycated in plasma VLDL. Phosphorylated by FAM20C in the extracellular medium.

The protein resides in the secreted. It localises to the extracellular space. Its subcellular location is the extracellular matrix. The protein localises to the extracellular vesicle. It is found in the endosome. The protein resides in the multivesicular body. Functionally, APOE is an apolipoprotein, a protein associating with lipid particles, that mainly functions in lipoprotein-mediated lipid transport between organs via the plasma and interstitial fluids. APOE is a core component of plasma lipoproteins and is involved in their production, conversion and clearance. Apolipoproteins are amphipathic molecules that interact both with lipids of the lipoprotein particle core and the aqueous environment of the plasma. As such, APOE associates with chylomicrons, chylomicron remnants, very low density lipoproteins (VLDL) and intermediate density lipoproteins (IDL) but shows a preferential binding to high-density lipoproteins (HDL). It also binds a wide range of cellular receptors including the LDL receptor/LDLR, the LDL receptor-related proteins LRP1, LRP2 and LRP8 and the very low-density lipoprotein receptor/VLDLR that mediate the cellular uptake of the APOE-containing lipoprotein particles. Finally, APOE also has a heparin-binding activity and binds heparan-sulfate proteoglycans on the surface of cells, a property that supports the capture and the receptor-mediated uptake of APOE-containing lipoproteins by cells. A main function of APOE is to mediate lipoprotein clearance through the uptake of chylomicrons, VLDLs, and HDLs by hepatocytes. APOE is also involved in the biosynthesis by the liver of VLDLs as well as their uptake by peripheral tissues ensuring the delivery of triglycerides and energy storage in muscle, heart and adipose tissues. By participating in the lipoprotein-mediated distribution of lipids among tissues, APOE plays a critical role in plasma and tissues lipid homeostasis. APOE is also involved in two steps of reverse cholesterol transport, the HDLs-mediated transport of cholesterol from peripheral tissues to the liver, and thereby plays an important role in cholesterol homeostasis. First, it is functionally associated with ABCA1 in the biogenesis of HDLs in tissues. Second, it is enriched in circulating HDLs and mediates their uptake by hepatocytes. APOE also plays an important role in lipid transport in the central nervous system, regulating neuron survival and sprouting. The protein is Apolipoprotein E (APOE) of Papio anubis (Olive baboon).